Reading from the N-terminus, the 133-residue chain is Phosphoribosyl-AMP cyclohydrolase (133 aa).

Aspartate 77 is a binding site for Mg(2+). Residue cysteine 78 participates in Zn(2+) binding. Aspartate 79 and aspartate 81 together coordinate Mg(2+). Residues cysteine 95 and cysteine 102 each contribute to the Zn(2+) site.

The protein belongs to the PRA-CH family. As to quaternary structure, homodimer. It depends on Mg(2+) as a cofactor. Zn(2+) serves as cofactor.

Its subcellular location is the cytoplasm. The enzyme catalyses 1-(5-phospho-beta-D-ribosyl)-5'-AMP + H2O = 1-(5-phospho-beta-D-ribosyl)-5-[(5-phospho-beta-D-ribosylamino)methylideneamino]imidazole-4-carboxamide. The protein operates within amino-acid biosynthesis; L-histidine biosynthesis; L-histidine from 5-phospho-alpha-D-ribose 1-diphosphate: step 3/9. Its function is as follows. Catalyzes the hydrolysis of the adenine ring of phosphoribosyl-AMP. The sequence is that of Phosphoribosyl-AMP cyclohydrolase from Azotobacter vinelandii (strain DJ / ATCC BAA-1303).